Reading from the N-terminus, the 320-residue chain is Nod factor export ATP-binding protein I (320 aa).

The region spanning 15-245 (VSATGVWKKR…LGALKILEID (231 aa)) is the ABC transporter domain. An ATP-binding site is contributed by 47 to 54 (GTNGAGKS).

The protein belongs to the ABC transporter superfamily. Lipooligosaccharide exporter (TC 3.A.1.102) family. In terms of assembly, the complex is composed of two ATP-binding proteins (NodI) and two transmembrane proteins (NodJ).

The protein localises to the cell inner membrane. In terms of biological role, part of the ABC transporter complex NodIJ involved in the export of the nodulation factors (Nod factors), the bacterial signal molecules that induce symbiosis and subsequent nodulation induction. Nod factors are LCO (lipo-chitin oligosaccharide), a modified beta-1,4-linked N-acetylglucosamine oligosaccharide. This subunit is responsible for energy coupling to the transport system. This chain is Nod factor export ATP-binding protein I, found in Azorhizobium caulinodans (strain ATCC 43989 / DSM 5975 / JCM 20966 / LMG 6465 / NBRC 14845 / NCIMB 13405 / ORS 571).